Consider the following 505-residue polypeptide: Cholesteryl ester transfer protein (505 aa).

The N-terminal stretch at 1-24 (MLWAGGMRLGMARILLMLVHAAAA) is a signal peptide. Residues Asn68 and Asn114 are each glycosylated (N-linked (GlcNAc...) asparagine). A disulfide bond links Cys169 and Cys210. Asn266, Asn344, and Asn422 each carry an N-linked (GlcNAc...) asparagine glycan.

The protein belongs to the BPI/LBP/Plunc superfamily. BPI/LBP family. As to expression, highly expressed in liver brain, heart, and spleen. Secreted in plasma.

It is found in the secreted. The catalysed reaction is cholesteryl (9Z-octadecenoate)(in) = cholesteryl (9Z-octadecenoate)(out). It carries out the reaction 1,2,3-tri-(9Z-octadecenoyl)-glycerol(in) = 1,2,3-tri-(9Z-octadecenoyl)-glycerol(out). It catalyses the reaction cholesteryl (9Z,12Z)-octadecadienoate(in) = cholesteryl (9Z,12Z)-octadecadienoate(out). Involved in the transfer of neutral lipids, including cholesteryl ester and triglyceride, among lipoprotein particles. Allows the net movement of cholesteryl ester from high density lipoproteins/HDL to triglyceride-rich very low density lipoproteins/VLDL, and the equimolar transport of triglyceride from VLDL to HDL. Regulates the reverse cholesterol transport, by which excess cholesterol is removed from peripheral tissues and returned to the liver for elimination. This is Cholesteryl ester transfer protein from Gallus gallus (Chicken).